Reading from the N-terminus, the 578-residue chain is Arginine--tRNA ligase (578 aa).

A 'HIGH' region motif is present at residues 125–135 (PNVAKKMHVGH).

The protein belongs to the class-I aminoacyl-tRNA synthetase family. In terms of assembly, monomer.

It localises to the cytoplasm. It carries out the reaction tRNA(Arg) + L-arginine + ATP = L-arginyl-tRNA(Arg) + AMP + diphosphate. This is Arginine--tRNA ligase from Buchnera aphidicola subsp. Baizongia pistaciae (strain Bp).